The chain runs to 354 residues: Rhodopsin (354 aa).

Over 1–36 (MNGTEGPAFYVPMSNATGVVRSPYEYPQYYLVAPWA) the chain is Extracellular. N-linked (GlcNAc...) asparagine glycosylation is found at Asn-2 and Asn-15. Residues 37–61 (YGLLAAYMFFLIITGFPVNFLTLYV) form a helical membrane-spanning segment. At 62–73 (TIEHKKLRTPLN) the chain is on the cytoplasmic side. The helical transmembrane segment at 74–96 (YILLNLAIADLFMVFGGFTTTMY) threads the bilayer. Over 97 to 110 (TSLHGYFVFGRLGC) the chain is Extracellular. A disulfide bridge links Cys-110 with Cys-187. The helical transmembrane segment at 111–133 (NLEGFFATLGGEMGLWSLVVLAI) threads the bilayer. Positions 134-136 (ERW) match the 'Ionic lock' involved in activated form stabilization motif. Over 134–152 (ERWMVVCKPVSNFRFGENH) the chain is Cytoplasmic. The chain crosses the membrane as a helical span at residues 153-173 (AIMGVAFTWVMACSCAVPPLV). Residues 174–202 (GWSRYIPEGMQCSCGVDYYTRTPGVNNES) lie on the Extracellular side of the membrane. A glycan (N-linked (GlcNAc...) asparagine) is linked at Asn-200. A helical transmembrane segment spans residues 203–224 (FVIYMFIVHFFIPLIVIFFCYG). The Cytoplasmic portion of the chain corresponds to 225 to 252 (RLVCTVKEAAAQQQESETTQRAEREVTR). Residues 253-274 (MVIIMVIAFLICWLPYAGVAWY) form a helical membrane-spanning segment. Over 275–286 (IFTHQGSEFGPV) the chain is Extracellular. A helical transmembrane segment spans residues 287–308 (FMTLPAFFAKTSAVYNPCIYIC). Position 296 is an N6-(retinylidene)lysine (Lys-296). Residues 309 to 354 (MNKQFRHCMITTLCCGKNPFEEEEGASTTASKTEASSVSSSSVSPA) lie on the Cytoplasmic side of the membrane. The segment at 333–354 (GASTTASKTEASSVSSSSVSPA) is disordered. Over residues 334–354 (ASTTASKTEASSVSSSSVSPA) the composition is skewed to low complexity.

This sequence belongs to the G-protein coupled receptor 1 family. Opsin subfamily. In terms of processing, phosphorylated on some or all of the serine and threonine residues present in the C-terminal region. Contains one covalently linked retinal chromophore. Retinal rod photoreceptor cells, predominantly in the outer segments (at protein level). Retinal rod photoreceptor cells.

Its subcellular location is the membrane. It localises to the cell projection. The protein resides in the cilium. It is found in the photoreceptor outer segment. Photoreceptor required for image-forming vision at low light intensity. While most salt water fish species use retinal as chromophore, most freshwater fish use 3-dehydroretinal, or a mixture of retinal and 3-dehydroretinal. Light-induced isomerization of 11-cis to all-trans retinal triggers a conformational change that activates signaling via G-proteins. Subsequent receptor phosphorylation mediates displacement of the bound G-protein alpha subunit by arrestin and terminates signaling. This is Rhodopsin (rho) from Danio rerio (Zebrafish).